Reading from the N-terminus, the 58-residue chain is Large ribosomal subunit protein uL30 (58 aa).

The protein belongs to the universal ribosomal protein uL30 family. Part of the 50S ribosomal subunit.

This chain is Large ribosomal subunit protein uL30, found in Parabacteroides distasonis (strain ATCC 8503 / DSM 20701 / CIP 104284 / JCM 5825 / NCTC 11152).